The primary structure comprises 407 residues: Phosphopentomutase (407 aa).

6 residues coordinate Mn(2+): Asp-10, Asp-306, His-311, Asp-347, His-348, and His-359.

Belongs to the phosphopentomutase family. The cofactor is Mn(2+).

The protein resides in the cytoplasm. It carries out the reaction 2-deoxy-alpha-D-ribose 1-phosphate = 2-deoxy-D-ribose 5-phosphate. It catalyses the reaction alpha-D-ribose 1-phosphate = D-ribose 5-phosphate. Its pathway is carbohydrate degradation; 2-deoxy-D-ribose 1-phosphate degradation; D-glyceraldehyde 3-phosphate and acetaldehyde from 2-deoxy-alpha-D-ribose 1-phosphate: step 1/2. In terms of biological role, isomerase that catalyzes the conversion of deoxy-ribose 1-phosphate (dRib-1-P) and ribose 1-phosphate (Rib-1-P) to deoxy-ribose 5-phosphate (dRib-5-P) and ribose 5-phosphate (Rib-5-P), respectively. This chain is Phosphopentomutase, found in Edwardsiella ictaluri (strain 93-146).